Reading from the N-terminus, the 446-residue chain is Trigger factor (446 aa).

The PPIase FKBP-type domain maps to 182–267; that stretch reads GDKVVVDYQN…VKNIFMMKAI (86 aa).

Belongs to the FKBP-type PPIase family. Tig subfamily.

It localises to the cytoplasm. The enzyme catalyses [protein]-peptidylproline (omega=180) = [protein]-peptidylproline (omega=0). Its function is as follows. Involved in protein export. Acts as a chaperone by maintaining the newly synthesized protein in an open conformation. Functions as a peptidyl-prolyl cis-trans isomerase. This is Trigger factor from Ehrlichia ruminantium (strain Gardel).